The chain runs to 492 residues: Bifunctional purine biosynthesis protein PurH (492 aa).

In terms of domain architecture, MGS-like spans Met-1–Val-144.

Belongs to the PurH family.

It carries out the reaction (6R)-10-formyltetrahydrofolate + 5-amino-1-(5-phospho-beta-D-ribosyl)imidazole-4-carboxamide = 5-formamido-1-(5-phospho-D-ribosyl)imidazole-4-carboxamide + (6S)-5,6,7,8-tetrahydrofolate. The enzyme catalyses IMP + H2O = 5-formamido-1-(5-phospho-D-ribosyl)imidazole-4-carboxamide. It functions in the pathway purine metabolism; IMP biosynthesis via de novo pathway; 5-formamido-1-(5-phospho-D-ribosyl)imidazole-4-carboxamide from 5-amino-1-(5-phospho-D-ribosyl)imidazole-4-carboxamide (10-formyl THF route): step 1/1. Its pathway is purine metabolism; IMP biosynthesis via de novo pathway; IMP from 5-formamido-1-(5-phospho-D-ribosyl)imidazole-4-carboxamide: step 1/1. The chain is Bifunctional purine biosynthesis protein PurH from Staphylococcus aureus (strain bovine RF122 / ET3-1).